Consider the following 1070-residue polypeptide: MLRDANEGMSTIPGFSQIQFEGFCRFIDRGLMEELNKFPKIEDTDQEIEFQLFVETYQLVEPLIKERDAVHESLTYCSELYVPAGLIWKTGKDIQEQTIFIGNIPLMNSLGTSIVNGIYRIVINQILQSPGIYYRSELDHNGISVYTGTIISDWGGRSELEIDRKARIWARVSRKQKISILVPSSAMGSNLKEIIDNVCYPEIFLSFPNDKEKKKIGSKENAILEFYQQFACVGGDPVFSESLCKELQKKFFQQRCELGRIGRRNMNRRLNLDIPHNITFLLPRDVLAAADHLIGMKFGMGTLDDMNHLKNKRIRSVADLLQDQFGLAMVRLENAVRGTIGGAIRQKLIPTPHNLVTSTPLTTTYESFFGLHPLSQVLDRTNPLTQIVHGRKSSYLGPGGLTGRTASFRIRDIHPSHYGRICPIDTSEGINVGLIGSLAIHARIGHWGSLERPFYEISERSKGVRVIYLSPSIDEYYMVTAGNSLALNHGIQEEQVVPARYRQEFLTIAWEQIQLRSIFPFQYFSVGASLIPFIEHNDANRALMSSNMQRQAVPLSRSEKCIVGTGLERQAALDSGVSAIAEHEGKIIYTDTDKIILSGNGATLSIPLVMYQRSNKNTCMHQKPQVSRGKCIKKGQILADGAATVGGELALGKNVLVAYMPWEGYNFEDAVLISERLVYGDIYTSFHIRKYEIQTHVTSQGPERITNEIPHLEAHLLRNLDRNGIVMLGSWVETGDILVGKLTPQVAKESSYAPEDRLLRAILGIQVSTAKETCLKLPIGGRGRVIDVRWIHKKGGSSYNPETIRVYISQKREIKVGDKVAGRHGNKGIISKILPRQDMPYLQDGTPVDMVFNPLGVPSRMNVGQIFECSLGLAGGLLDRHYRIAPFDERYEQEASRKLVFSELYEASKQTANPWVFEPEYPGKSRIFDGRTGDPFAQPVIIGKSYILKLIHQVDDKIHGRSSGHYALVTQQPLRGRAKQGGQRVGEMEVWALEGFGVAHILQEMLTYKSDHIRARQEVLGTTIIGGTIPNPEDAPESFRLLVRELRSLALELNHFLVSEKNFQINRKEA.

The protein belongs to the RNA polymerase beta chain family. In plastids the minimal PEP RNA polymerase catalytic core is composed of four subunits: alpha, beta, beta', and beta''. When a (nuclear-encoded) sigma factor is associated with the core the holoenzyme is formed, which can initiate transcription.

The protein localises to the plastid. The protein resides in the chloroplast. The catalysed reaction is RNA(n) + a ribonucleoside 5'-triphosphate = RNA(n+1) + diphosphate. Its function is as follows. DNA-dependent RNA polymerase catalyzes the transcription of DNA into RNA using the four ribonucleoside triphosphates as substrates. In Nandina domestica (Heavenly bamboo), this protein is DNA-directed RNA polymerase subunit beta.